Reading from the N-terminus, the 419-residue chain is Putative polyketide beta-ketoacyl synthase 2 (419 aa).

Positions 10-413 (TRRTAVTGIG…GSNAALVLRP (404 aa)) constitute a Ketosynthase family 3 (KS3) domain.

Belongs to the thiolase-like superfamily. Beta-ketoacyl-ACP synthases family.

It functions in the pathway antibiotic biosynthesis; curamycin biosynthesis. This Streptomyces cyaneus (Streptomyces curacoi) protein is Putative polyketide beta-ketoacyl synthase 2 (curB).